The chain runs to 218 residues: Acetoacetyl-CoA:acetate/butyrate CoA transferase alpha subunit (218 aa).

Glycine 24 to glycine 30 is a binding site for CoA.

This sequence belongs to the 3-oxoacid CoA-transferase subunit A family. As to quaternary structure, heterotetramer composed of two alpha subunits (CtfA) and two beta subunits (CtfB).

It carries out the reaction acetoacetate + butanoyl-CoA = acetoacetyl-CoA + butanoate. It catalyses the reaction acetoacetate + acetyl-CoA = acetoacetyl-CoA + acetate. With respect to regulation, the acetate and butyrate conversion reactions are inhibited in vitro by physiological levels of acetone and butanol. In terms of biological role, catalyzes the transfer of CoA from acetoacetyl-CoA to acetate, butyrate and propionate. Also shows low activity with valerate, isobutyrate and crotonate. Plays an important role in the metabolic shift between the acid-producing and solvent-forming states of C.acetobutylicum. Acts mainly to detoxify the medium by removing the acetate and butyrate excreted earlier in the fermentation. This Clostridium acetobutylicum (strain ATCC 824 / DSM 792 / JCM 1419 / IAM 19013 / LMG 5710 / NBRC 13948 / NRRL B-527 / VKM B-1787 / 2291 / W) protein is Acetoacetyl-CoA:acetate/butyrate CoA transferase alpha subunit.